The following is a 378-amino-acid chain: uncharacterized protein (378 aa).

11 helical membrane-spanning segments follow: residues 12-34 (SLAF…STFF), 44-66 (VKIY…IFLG), 92-112 (SIAL…LMLI), 132-154 (GFAS…IFLA), 161-180 (EVYA…SIIT), 200-222 (TFLL…IAMM), 235-257 (VEIY…FWGV), 267-285 (VFPL…LFFA), 290-312 (LIFV…RVYI), 327-349 (FLSL…FLFI), and 356-373 (LSAL…FIYL).

The protein resides in the cell membrane. This is an uncharacterized protein from Aquifex aeolicus (strain VF5).